Here is a 210-residue protein sequence, read N- to C-terminus: MTTIETLKWDGKKSGEVKLDLTVAKETSSADLIHRAVLRQLANKRQGTASTLTRSEVRGGGRKPYKQKGTGRARQGSIRTPLRPGGGIIFGPKPRSYNLDMNRKERRLALRTALMSRISDVKAVEDFGSTLKQPKTSDIINGLTRLGIQKTEKVLVILDSPSEVIKKSINNIEKVKLIAADQLNVFDILNANKLVIGQSAINKIKEVYAS.

The interval 46 to 89 (QGTASTLTRSEVRGGGRKPYKQKGTGRARQGSIRTPLRPGGGII) is disordered. Positions 60-71 (GGRKPYKQKGTG) are enriched in basic residues.

It belongs to the universal ribosomal protein uL4 family. As to quaternary structure, part of the 50S ribosomal subunit.

Functionally, one of the primary rRNA binding proteins, this protein initially binds near the 5'-end of the 23S rRNA. It is important during the early stages of 50S assembly. It makes multiple contacts with different domains of the 23S rRNA in the assembled 50S subunit and ribosome. Forms part of the polypeptide exit tunnel. The sequence is that of Large ribosomal subunit protein uL4 from Prochlorococcus marinus (strain MIT 9312).